The primary structure comprises 611 residues: Chaperone protein DnaK (611 aa).

Thr173 is subject to Phosphothreonine; by autocatalysis. Residues 579–592 (AAGQAEGAQGAQDA) are compositionally biased toward low complexity. The interval 579–611 (AAGQAEGAQGAQDAGAKKDNVVDAEFEEVKEDK) is disordered. Acidic residues predominate over residues 600-611 (VDAEFEEVKEDK).

Belongs to the heat shock protein 70 family.

Acts as a chaperone. The polypeptide is Chaperone protein DnaK (Bacillus mycoides (strain KBAB4) (Bacillus weihenstephanensis)).